Consider the following 193-residue polypeptide: Orotate phosphoribosyltransferase (193 aa).

Residue 117 to 125 (EDVVTTGLS) participates in 5-phospho-alpha-D-ribose 1-diphosphate binding. Orotate-binding residues include threonine 121 and arginine 149.

The protein belongs to the purine/pyrimidine phosphoribosyltransferase family. PyrE subfamily. As to quaternary structure, homodimer. Mg(2+) is required as a cofactor.

The enzyme catalyses orotidine 5'-phosphate + diphosphate = orotate + 5-phospho-alpha-D-ribose 1-diphosphate. It functions in the pathway pyrimidine metabolism; UMP biosynthesis via de novo pathway; UMP from orotate: step 1/2. In terms of biological role, catalyzes the transfer of a ribosyl phosphate group from 5-phosphoribose 1-diphosphate to orotate, leading to the formation of orotidine monophosphate (OMP). The protein is Orotate phosphoribosyltransferase of Erythrobacter litoralis (strain HTCC2594).